The sequence spans 192 residues: Phosphoheptose isomerase (192 aa).

The SIS domain occupies Cys36 to Ala192. Asn51–Gly53 lines the substrate pocket. Zn(2+) is bound by residues His60 and Glu64. Substrate is bound by residues Glu64, Asn93–Asp94, Thr119–Ser121, Ser124, and Gln171. Positions 171 and 179 each coordinate Zn(2+).

It belongs to the SIS family. GmhA subfamily. In terms of assembly, homotetramer. Zn(2+) serves as cofactor.

It is found in the cytoplasm. The catalysed reaction is 2 D-sedoheptulose 7-phosphate = D-glycero-alpha-D-manno-heptose 7-phosphate + D-glycero-beta-D-manno-heptose 7-phosphate. Its pathway is carbohydrate biosynthesis; D-glycero-D-manno-heptose 7-phosphate biosynthesis; D-glycero-alpha-D-manno-heptose 7-phosphate and D-glycero-beta-D-manno-heptose 7-phosphate from sedoheptulose 7-phosphate: step 1/1. Functionally, catalyzes the isomerization of sedoheptulose 7-phosphate in D-glycero-D-manno-heptose 7-phosphate. This chain is Phosphoheptose isomerase, found in Paramagnetospirillum magneticum (strain ATCC 700264 / AMB-1) (Magnetospirillum magneticum).